The following is a 775-amino-acid chain: 5-methyltetrahydropteroyltriglutamate--homocysteine methyltransferase (775 aa).

Residues 16-19 and K115 each bind 5-methyltetrahydropteroyltri-L-glutamate; that span reads REMK. L-homocysteine-binding positions include 435-437 and E488; that span reads IGS. L-methionine-binding positions include 435–437 and E488; that span reads IGS. Residues 519 to 520 and W565 each bind 5-methyltetrahydropteroyltri-L-glutamate; that span reads RC. D603 serves as a coordination point for L-homocysteine. L-methionine is bound at residue D603. 5-methyltetrahydropteroyltri-L-glutamate is bound at residue E609. 3 residues coordinate Zn(2+): H645, C647, and E669. H698 functions as the Proton donor in the catalytic mechanism. Residue C730 coordinates Zn(2+).

Belongs to the vitamin-B12 independent methionine synthase family. Zn(2+) serves as cofactor.

The catalysed reaction is 5-methyltetrahydropteroyltri-L-glutamate + L-homocysteine = tetrahydropteroyltri-L-glutamate + L-methionine. It participates in amino-acid biosynthesis; L-methionine biosynthesis via de novo pathway; L-methionine from L-homocysteine (MetE route): step 1/1. Functionally, catalyzes the transfer of a methyl group from 5-methyltetrahydrofolate to homocysteine resulting in methionine formation. This is 5-methyltetrahydropteroyltriglutamate--homocysteine methyltransferase from Coxiella burnetii (strain CbuK_Q154) (Coxiella burnetii (strain Q154)).